Consider the following 128-residue polypeptide: Large ribosomal subunit protein bL17 (128 aa).

This sequence belongs to the bacterial ribosomal protein bL17 family. In terms of assembly, part of the 50S ribosomal subunit. Contacts protein L32.

The chain is Large ribosomal subunit protein bL17 from Streptococcus equi subsp. zooepidemicus (strain H70).